The primary structure comprises 415 residues: Tyrosine--tRNA ligase (415 aa).

An L-tyrosine-binding site is contributed by Tyr-34. The short motif at 39–48 is the 'HIGH' region element; that stretch reads PTADSLHLGH. L-tyrosine-binding residues include Tyr-164 and Gln-168. The 'KMSKS' region signature appears at 226-230; it reads KFGKS. Lys-229 provides a ligand contact to ATP. In terms of domain architecture, S4 RNA-binding spans 348–415; it reads KNIVDFLVDG…KKKYFLGKIK (68 aa).

Belongs to the class-I aminoacyl-tRNA synthetase family. TyrS type 1 subfamily. As to quaternary structure, homodimer.

It is found in the cytoplasm. The enzyme catalyses tRNA(Tyr) + L-tyrosine + ATP = L-tyrosyl-tRNA(Tyr) + AMP + diphosphate + H(+). Its function is as follows. Catalyzes the attachment of tyrosine to tRNA(Tyr) in a two-step reaction: tyrosine is first activated by ATP to form Tyr-AMP and then transferred to the acceptor end of tRNA(Tyr). This is Tyrosine--tRNA ligase from Leuconostoc citreum (strain KM20).